The primary structure comprises 330 residues: Beta-1,6-galactofuranosyltransferase WbbI (330 aa).

The protein resides in the cytoplasm. It participates in bacterial outer membrane biogenesis; lipopolysaccharide biosynthesis. Functionally, involved in the transfer of galactofuranose (Galf) onto an alpha-D-gluco-configured acceptor substrate to form a beta-1,6-linkage. It uses n-octyl alpha-D-glucopyranoside as an acceptor substrate for the addition of galactofuranose from the donor substrate UDP-galactofuranose. It is not able to use beta-D-glucopyranoside isomers. In Escherichia coli (strain K12), this protein is Beta-1,6-galactofuranosyltransferase WbbI (wbbI).